A 196-amino-acid chain; its full sequence is Lipoprotein signal peptidase (196 aa).

A run of 3 helical transmembrane segments spans residues 17 to 37, 73 to 93, and 96 to 116; these read SIII…IDNL, SNAI…YLMI, and NTIG…GNLI. Catalysis depends on residues aspartate 126 and aspartate 144. A helical transmembrane segment spans residues 135-155; the sequence is YSFPVFNLADCFITIGVIILI.

Belongs to the peptidase A8 family.

The protein resides in the cell inner membrane. The enzyme catalyses Release of signal peptides from bacterial membrane prolipoproteins. Hydrolyzes -Xaa-Yaa-Zaa-|-(S,diacylglyceryl)Cys-, in which Xaa is hydrophobic (preferably Leu), and Yaa (Ala or Ser) and Zaa (Gly or Ala) have small, neutral side chains.. It participates in protein modification; lipoprotein biosynthesis (signal peptide cleavage). Functionally, this protein specifically catalyzes the removal of signal peptides from prolipoproteins. The sequence is that of Lipoprotein signal peptidase from Rickettsia akari (strain Hartford).